Consider the following 200-residue polypeptide: Anthranilate synthase component 2 (200 aa).

Positions 3-196 (NILLLDNIDS…IHWASLKYIT (194 aa)) constitute a Glutamine amidotransferase type-1 domain. An L-glutamine-binding site is contributed by 57–59 (GPS). Cys-84 acts as the Nucleophile; for GATase activity in catalysis. L-glutamine contacts are provided by residues Gln-88 and 134–135 (SL). Catalysis depends on for GATase activity residues His-170 and Glu-172.

As to quaternary structure, heterotetramer consisting of two non-identical subunits: a beta subunit (TrpG) and a large alpha subunit (TrpE).

It carries out the reaction chorismate + L-glutamine = anthranilate + pyruvate + L-glutamate + H(+). It functions in the pathway amino-acid biosynthesis; L-tryptophan biosynthesis; L-tryptophan from chorismate: step 1/5. In terms of biological role, part of a heterotetrameric complex that catalyzes the two-step biosynthesis of anthranilate, an intermediate in the biosynthesis of L-tryptophan. In the first step, the glutamine-binding beta subunit (TrpG) of anthranilate synthase (AS) provides the glutamine amidotransferase activity which generates ammonia as a substrate that, along with chorismate, is used in the second step, catalyzed by the large alpha subunit of AS (TrpE) to produce anthranilate. In the absence of TrpG, TrpE can synthesize anthranilate directly from chorismate and high concentrations of ammonia. The chain is Anthranilate synthase component 2 (trpG) from Buchnera aphidicola subsp. Acyrthosiphon pisum (strain APS) (Acyrthosiphon pisum symbiotic bacterium).